Reading from the N-terminus, the 328-residue chain is Beta-ketoacyl-[acyl-carrier-protein] synthase III (328 aa).

Residues cysteine 122 and histidine 255 contribute to the active site. The segment at 256–260 is ACP-binding; it reads QANIR. Asparagine 285 is a catalytic residue.

It belongs to the thiolase-like superfamily. FabH family. In terms of assembly, homodimer.

The protein localises to the cytoplasm. The catalysed reaction is malonyl-[ACP] + acetyl-CoA + H(+) = 3-oxobutanoyl-[ACP] + CO2 + CoA. The protein operates within lipid metabolism; fatty acid biosynthesis. Catalyzes the condensation reaction of fatty acid synthesis by the addition to an acyl acceptor of two carbons from malonyl-ACP. Catalyzes the first condensation reaction which initiates fatty acid synthesis and may therefore play a role in governing the total rate of fatty acid production. Possesses both acetoacetyl-ACP synthase and acetyl transacylase activities. Its substrate specificity determines the biosynthesis of branched-chain and/or straight-chain of fatty acids. In Janthinobacterium sp. (strain Marseille) (Minibacterium massiliensis), this protein is Beta-ketoacyl-[acyl-carrier-protein] synthase III.